Reading from the N-terminus, the 269-residue chain is Triosephosphate isomerase (269 aa).

8 to 10 (NWK) contacts substrate. H105 functions as the Electrophile in the catalytic mechanism. E183 acts as the Proton acceptor in catalysis. Substrate-binding positions include G189, S227, and 248–249 (GG).

Belongs to the triosephosphate isomerase family. As to quaternary structure, homodimer.

It localises to the cytoplasm. It carries out the reaction D-glyceraldehyde 3-phosphate = dihydroxyacetone phosphate. Its pathway is carbohydrate biosynthesis; gluconeogenesis. It functions in the pathway carbohydrate degradation; glycolysis; D-glyceraldehyde 3-phosphate from glycerone phosphate: step 1/1. Involved in the gluconeogenesis. Catalyzes stereospecifically the conversion of dihydroxyacetone phosphate (DHAP) to D-glyceraldehyde-3-phosphate (G3P). In Psychrobacter cryohalolentis (strain ATCC BAA-1226 / DSM 17306 / VKM B-2378 / K5), this protein is Triosephosphate isomerase.